We begin with the raw amino-acid sequence, 791 residues long: von Willebrand factor A domain-containing protein 2 (791 aa).

A signal peptide spans 1-23 (MPPLLLLPAIYMLLFFRVSPTIS). One can recognise a VWFA 1 domain in the interval 51-221 (DILFLLDGSH…DATNGLLSTL (171 aa)). Asparagine 146 carries an N-linked (GlcNAc...) asparagine glycan. Positions 295–332 (PGPCDSQPCQNGGTCIPEGVDRYHCLCPLAFGGEVNCA) constitute an EGF-like 1 domain. Disulfide bonds link cysteine 298/cysteine 309, cysteine 303/cysteine 319, and cysteine 321/cysteine 331. 2 consecutive VWFA domains span residues 342-516 (DVLF…QRRL) and 530-704 (DLVF…IEWL). The 37-residue stretch at 711–747 (PVNLCKPSPCMNEGTCVLKNGSYRCECRGGWEGPHCE) folds into the EGF-like 2 domain. 3 cysteine pairs are disulfide-bonded: cysteine 715-cysteine 726, cysteine 720-cysteine 735, and cysteine 737-cysteine 746. Residues 762–791 (HQEPAGLQGPTPSQQAPKHLRIGKALSSAK) are disordered.

In terms of assembly, forms monomers and multimers. Detected in uterus, kidney, and skin. Also detected in intestine and lung of adult mice, and in calvaria, femur, brain, heart, intestine, skeletal muscle, and lung of newborn mice.

Its subcellular location is the secreted. The polypeptide is von Willebrand factor A domain-containing protein 2 (Vwa2) (Mus musculus (Mouse)).